Reading from the N-terminus, the 203-residue chain is CASP-like protein 2U2 (203 aa).

The interval 1–21 (MGGFVDDGAAGLAPSHGSSRA) is disordered. Over 1–27 (MGGFVDDGAAGLAPSHGSSRAGRGLEG) the chain is Cytoplasmic. The helical transmembrane segment at 28 to 48 (AGVFLRFVASLLSIAGLMLLV) threads the bilayer. At 49–73 (KDNQTVQQMVATEAVTLETKYSDIS) the chain is on the extracellular side. An N-linked (GlcNAc...) asparagine glycan is attached at asparagine 51. The chain crosses the membrane as a helical span at residues 74-94 (AFVFLLYTNGLVAVYCFFLAL). The Cytoplasmic portion of the chain corresponds to 95 to 108 (ASVFSLIASARSGK). A helical transmembrane segment spans residues 109–129 (LAGWVTFVLDQGLAYVLLAAA). The Extracellular portion of the chain corresponds to 130 to 163 (AASTEVLYLAENGDLKTSWAEICSQFGHFCHMAR). The chain crosses the membrane as a helical span at residues 164–184 (ASIVVSFLSMLAMAVLSVMSA). The Cytoplasmic portion of the chain corresponds to 185–203 (QQLFSKYRRPMTAKTAQDI).

It belongs to the Casparian strip membrane proteins (CASP) family. In terms of assembly, homodimer and heterodimers.

The protein resides in the cell membrane. The polypeptide is CASP-like protein 2U2 (Osmunda lancea (Fern)).